A 128-amino-acid chain; its full sequence is Cytochrome c-type biogenesis protein CcmE (128 aa).

The Cytoplasmic portion of the chain corresponds to 1–7 (MKKKHKR). A helical; Signal-anchor for type II membrane protein membrane pass occupies residues 8 to 28 (LLVASGIFFFLNCIVFFILTI). Residues 29–128 (LRENISFFYT…KHDENYMPRK (100 aa)) lie on the Extracellular side of the membrane. Residues His-120 and Tyr-124 each coordinate heme.

The protein belongs to the CcmE/CycJ family.

It is found in the cell membrane. Functionally, heme chaperone required for the biogenesis of c-type cytochromes. Transiently binds heme delivered by CcmC and transfers the heme to apo-cytochromes in a process facilitated by CcmF and CcmH. This is Cytochrome c-type biogenesis protein CcmE from Wolbachia sp. subsp. Brugia malayi (strain TRS).